The sequence spans 118 residues: ATP synthase subunit gamma, chloroplastic (118 aa).

Cys30 and Cys36 are joined by a disulfide.

This sequence belongs to the ATPase gamma chain family. F-type ATPases have 2 components, CF(1) - the catalytic core - and CF(0) - the membrane proton channel. CF(1) has five subunits: alpha(3), beta(3), gamma(1), delta(1), epsilon(1). CF(0) has four main subunits: a, b, b' and c.

It is found in the plastid. Its subcellular location is the chloroplast thylakoid membrane. Produces ATP from ADP in the presence of a proton gradient across the membrane. The gamma chain is believed to be important in regulating ATPase activity and the flow of protons through the CF(0) complex. Functionally, inceptin is a proteolytic fragment produced by insect larvae that previously ingested the protein. This peptide mediate plant perception of herbivory through the induction of volatile, phenylpropanoid and protease inhibitor defenses such as ethylene, jasmonic acid and salicylic acid for example. The sequence is that of ATP synthase subunit gamma, chloroplastic from Vigna unguiculata (Cowpea).